The primary structure comprises 313 residues: Methionyl-tRNA formyltransferase (313 aa).

Residue 112 to 115 (SLLP) participates in (6S)-5,6,7,8-tetrahydrofolate binding.

The protein belongs to the Fmt family.

It catalyses the reaction L-methionyl-tRNA(fMet) + (6R)-10-formyltetrahydrofolate = N-formyl-L-methionyl-tRNA(fMet) + (6S)-5,6,7,8-tetrahydrofolate + H(+). Its function is as follows. Attaches a formyl group to the free amino group of methionyl-tRNA(fMet). The formyl group appears to play a dual role in the initiator identity of N-formylmethionyl-tRNA by promoting its recognition by IF2 and preventing the misappropriation of this tRNA by the elongation apparatus. This chain is Methionyl-tRNA formyltransferase, found in Geotalea uraniireducens (strain Rf4) (Geobacter uraniireducens).